Reading from the N-terminus, the 168-residue chain is MSSLDNDKTENFIQERLDSLHEIDCKVVTLLDQFSSIFQSFYTKSKEDFSQQTSDIYSTLSKVAIDLRKEIKIMDDNIGAYDKNDDNVMILPISNVDQKNTKLGRKRLDLELAELKRLISDEKQVETLENESNNEIQPKTESDTNQVETNENGNDINNKESEDIEMKE.

A disordered region spans residues 126-168 (ETLENESNNEIQPKTESDTNQVETNENGNDINNKESEDIEMKE). Over residues 130–156 (NESNNEIQPKTESDTNQVETNENGNDI) the composition is skewed to polar residues. Over residues 157–168 (NNKESEDIEMKE) the composition is skewed to basic and acidic residues.

It belongs to the Mediator complex subunit 11 family. As to quaternary structure, component of the Mediator complex.

The protein localises to the nucleus. Component of the Mediator complex, a coactivator involved in the regulated transcription of nearly all RNA polymerase II-dependent genes. Mediator functions as a bridge to convey information from gene-specific regulatory proteins to the basal RNA polymerase II transcription machinery. Mediator is recruited to promoters by direct interactions with regulatory proteins and serves as a scaffold for the assembly of a functional pre-initiation complex with RNA polymerase II and the general transcription factors. In Candida albicans (strain SC5314 / ATCC MYA-2876) (Yeast), this protein is Mediator of RNA polymerase II transcription subunit 11 (MED11).